The following is a 408-amino-acid chain: Voltage-gated potassium channel subunit beta-1 (408 aa).

The NADP(+) site is built by Thr-97, Trp-98, Gln-104, and Asp-126. Catalysis depends on Tyr-131, which acts as the Proton donor/acceptor. Residues Asn-199, Ser-229, Arg-230, Gln-255, Trp-284, Ser-285, Pro-286, Leu-287, Ala-288, Cys-289, Lys-295, Arg-305, Gly-364, Ser-366, Gln-370, Glu-373, and Asn-374 each coordinate NADP(+).

The protein belongs to the shaker potassium channel beta subunit family. As to quaternary structure, homotetramer. Interaction with tetrameric potassium channel alpha subunits gives rise to a heterooctamer. Identified in potassium channel complexes containing KCNA1, KCNA2, KCNA4, KCNA5, KCNA6, KCNAB1 and KCNAB2. Part of a complex containing KCNA1, KCNA4 and LGI1; interaction with LGI1 inhibits down-regulation of KCNA1 channel activity. Interacts with the dimer formed by GNB1 and GNG2; this enhances KCNA1 binding. Interacts with SQSTM1. As to expression, expression most abundant in aorta. Also high in left ventricle. Also detected in right ventricle, atrium, brain, skeletal muscle and kidney. Not detected in liver.

The protein resides in the cytoplasm. It is found in the membrane. The protein localises to the cell membrane. The enzyme catalyses a primary alcohol + NADP(+) = an aldehyde + NADPH + H(+). It catalyses the reaction a secondary alcohol + NADP(+) = a ketone + NADPH + H(+). Its function is as follows. Regulatory subunit of the voltage-gated potassium (Kv) Shaker channels composed of pore-forming and potassium-conducting alpha subunits and of regulatory beta subunits. The beta-1/KCNAB1 cytoplasmic subunit mediates closure of delayed rectifier potassium channels by physically obstructing the pore via its N-terminal domain and increases the speed of channel closure for other family members. Promotes the inactivation of Kv1.1/KCNA1, Kv1.2/KCNA2, Kv1.4/KCNA4, Kv1.5/KCNA5 and Kv1.6/KCNA6 alpha subunit-containing channels. Displays nicotinamide adenine dinucleotide phosphate (NADPH)-dependent aldoketoreductase activity by catalyzing the NADPH-dependent reduction of a variety of endogenous aldehydes and ketones. The binding of NADPH is required for efficient down-regulation of potassium channel activity. Oxidation of the bound NADPH restrains N-terminal domain from blocking the channel, thereby decreasing N-type inactivation of potassium channel activity. The chain is Voltage-gated potassium channel subunit beta-1 (KCNAB1) from Mustela putorius (European polecat).